We begin with the raw amino-acid sequence, 201 residues long: ATP-dependent dethiobiotin synthetase BioD (201 aa).

11-16 (DVGKTH) contacts ATP. Thr15 is a Mg(2+) binding site. Lys31 is an active-site residue. ATP is bound by residues Asp40 and 93-96 (ELAG). Residues Asp40 and Glu93 each contribute to the Mg(2+) site.

The protein belongs to the dethiobiotin synthetase family. In terms of assembly, homodimer. Requires Mg(2+) as cofactor.

The protein resides in the cytoplasm. It catalyses the reaction (7R,8S)-7,8-diammoniononanoate + CO2 + ATP = (4R,5S)-dethiobiotin + ADP + phosphate + 3 H(+). Its pathway is cofactor biosynthesis; biotin biosynthesis; biotin from 7,8-diaminononanoate: step 1/2. Catalyzes a mechanistically unusual reaction, the ATP-dependent insertion of CO2 between the N7 and N8 nitrogen atoms of 7,8-diaminopelargonic acid (DAPA, also called 7,8-diammoniononanoate) to form a ureido ring. This is ATP-dependent dethiobiotin synthetase BioD from Campylobacter jejuni subsp. jejuni serotype O:6 (strain 81116 / NCTC 11828).